Reading from the N-terminus, the 176-residue chain is MSSNQQPVVLGKLGSCHGIKGWLKITAYTDSVEGIFDYSPWLIKENGEWREVKVIQWRYQGKAVVAELEGVTTRERAQMLTNCEIGILPEQMNALPEDEFYWRDLIGCEVINTNGYNMGVVDQIVETGSNDVLLVKANAKDSFGKVERMLPFVPGQFILKVDIQGKQILVDWDPDF.

One can recognise a PRC barrel domain in the interval 97 to 176 (EDEFYWRDLI…QILVDWDPDF (80 aa)).

This sequence belongs to the RimM family. Binds ribosomal protein uS19.

It is found in the cytoplasm. An accessory protein needed during the final step in the assembly of 30S ribosomal subunit, possibly for assembly of the head region. Essential for efficient processing of 16S rRNA. May be needed both before and after RbfA during the maturation of 16S rRNA. It has affinity for free ribosomal 30S subunits but not for 70S ribosomes. This is Ribosome maturation factor RimM from Shewanella sp. (strain MR-4).